The primary structure comprises 251 residues: MADKLIYLIIPAYNEEKMIKNVVNNLQNHNYDNIIIVDDGSKDNTYKIMKELEEESKQNNNNNNNNNNNKVIAIKHEQNKGVGGATITGLKKAYELGADIAVTFDADGQHAPDDIAKVIQPIINDSKEYVVGSRIKNPKEFKNMPLTKKVGNLGLSFITFLLGGYYVTDSQSGLRAFSKSALKVLSEQLRAKRYETCSEALIIAKKNKLNIGEVPIKTIYTEYSMARGTNVMIGFKIFYRLLMLKMGKVLD.

Residues 150 to 167 (VGNLGLSFITFLLGGYYV) traverse the membrane as a helical segment.

Belongs to the glycosyltransferase 2 family.

Its subcellular location is the cell membrane. The catalysed reaction is a di-trans,poly-cis-dolichyl phosphate + UDP-N-acetyl-alpha-D-glucosamine = an N-acetyl-alpha-D-glucosaminyl-phospho-di-trans,poly-cis-dolichol + UDP. It participates in cell surface structure biogenesis; S-layer biogenesis. The protein operates within protein modification; protein glycosylation. In terms of biological role, involved in the assembly of an N-linked disaccharide that decorates the S-layer glycoprotein and flagellins. AglK initiates N-linked glycosylation through the formation of alpha-linked dolichyl monophosphate N-acetylglucosamine. It catalyzes the transfer of GlcNAc from the donor substrate UDP-GlcNAc to dolichyl phosphate C55 (Dol-P) to yield Dol-P-GlcNAc. AglK reaction proceeds with retention of stereochemistry. The reaction is specific for UDP-GlcNAc. AglK shows a stronger preference for short dolichol (C55-60 Dol-P) substrates compared with the longer (C85-105 Dol-P). In Methanococcus voltae, this protein is UDP-N-acetylglucosamine--dolichyl-phosphate N-acetylglucosaminyltransferase.